Here is a 596-residue protein sequence, read N- to C-terminus: Arginine--tRNA ligase (596 aa).

The 'HIGH' region signature appears at 128–138 (ANPTSSLHVGH).

The protein belongs to the class-I aminoacyl-tRNA synthetase family. As to quaternary structure, monomer.

It is found in the cytoplasm. It catalyses the reaction tRNA(Arg) + L-arginine + ATP = L-arginyl-tRNA(Arg) + AMP + diphosphate. This is Arginine--tRNA ligase from Acinetobacter baumannii (strain AB307-0294).